The following is a 235-amino-acid chain: 1-(5-phosphoribosyl)-5-[(5-phosphoribosylamino)methylideneamino] imidazole-4-carboxamide isomerase (235 aa).

Asp8 functions as the Proton acceptor in the catalytic mechanism. Asp127 functions as the Proton donor in the catalytic mechanism.

This sequence belongs to the HisA/HisF family.

The protein localises to the cytoplasm. The enzyme catalyses 1-(5-phospho-beta-D-ribosyl)-5-[(5-phospho-beta-D-ribosylamino)methylideneamino]imidazole-4-carboxamide = 5-[(5-phospho-1-deoxy-D-ribulos-1-ylimino)methylamino]-1-(5-phospho-beta-D-ribosyl)imidazole-4-carboxamide. It participates in amino-acid biosynthesis; L-histidine biosynthesis; L-histidine from 5-phospho-alpha-D-ribose 1-diphosphate: step 4/9. The chain is 1-(5-phosphoribosyl)-5-[(5-phosphoribosylamino)methylideneamino] imidazole-4-carboxamide isomerase from Nautilia profundicola (strain ATCC BAA-1463 / DSM 18972 / AmH).